The chain runs to 605 residues: Protein phosphatase 1D (605 aa).

The segment at 1–101 is interaction with CHEK1; it reads MAGLYSLGVS…CRRRSSVAFF (101 aa). The 368-residue stretch at 8 to 375 folds into the PPM-type phosphatase domain; that stretch reads GVSVFSDQGG…DNTSAIVICI (368 aa). The disordered stretch occupies residues 28–90; sequence VVEPEPTAEE…DAGASPAPSR (63 aa). 2 positions are modified to phosphoserine: serine 40 and serine 85. Residues aspartate 105, glycine 106, aspartate 314, and aspartate 366 each contribute to the Mn(2+) site. A disordered region spans residues 516–591; that stretch reads STPGQMKAQE…RRLRGQKKIG (76 aa). Polar residues-rich tracts occupy residues 530–544 and 555–577; these read PPTNFKRTLEESNSG and LSRSSGAQPASLPTTSQRKNSVK. Positions 579-588 are enriched in basic residues; sequence TMRRRLRGQK.

It belongs to the PP2C family. As to quaternary structure, interacts with CHEK1 and CHEK2; dephosphorylates them. Interacts with MAPK14. Mg(2+) is required as a cofactor. Mn(2+) serves as cofactor. In terms of tissue distribution, expressed in fetal and adult brain. Also detected in fetal liver and skeletal muscle, but not in their adult counterparts.

The protein localises to the nucleus. Its subcellular location is the cytoplasm. The protein resides in the cytosol. The enzyme catalyses O-phospho-L-seryl-[protein] + H2O = L-seryl-[protein] + phosphate. It carries out the reaction O-phospho-L-threonyl-[protein] + H2O = L-threonyl-[protein] + phosphate. Involved in the negative regulation of p53 expression. Required for the relief of p53-dependent checkpoint mediated cell cycle arrest. Binds to and dephosphorylates 'Ser-15' of TP53 and 'Ser-345' of CHEK1 which contributes to the functional inactivation of these proteins. Mediates MAPK14 dephosphorylation and inactivation. Is also an important regulator of global heterochromatin silencing and critical in maintaining genome integrity. In Homo sapiens (Human), this protein is Protein phosphatase 1D (PPM1D).